The following is a 1479-amino-acid chain: ESX secretion system protein EccC (1479 aa).

Residues 1 to 235 (MSQLWVLYET…SQEGDGDPRG (235 aa)) lie on the Cytoplasmic side of the membrane. Residues 236-256 (LWLMVLPPVMMLLVIGAVALI) form a helical membrane-spanning segment. Residues 257–259 (QPR) are Extracellular-facing. The chain crosses the membrane as a helical span at residues 260 to 280 (GVFIMISIAMFATTIVTSTAQ). The Cytoplasmic segment spans residues 281-1479 (YMREKKARQM…DQKIQIPKVE (1199 aa)). A coiled-coil region spans residues 291-321 (RKEKRRRIYTNYLEQKREELQALSEKQRNVL). FtsK domains are found at residues 652-848 (NDVV…NDSK) and 984-1168 (QSDY…SEKF). 672-679 (GTTGSGKS) provides a ligand contact to ATP. Residue Glu-785 is part of the active site. ATP is bound by residues 1004–1009 (GYGKST), Asn-1036, Asp-1105, Ile-1197, Asp-1206, 1287–1291 (RKGKT), and Ile-1475. In terms of domain architecture, FtsK 3 spans 1267 to 1444 (VRPVAINMRT…ILVTKKSEQS (178 aa)).

Whole protein oligomerizes in native gels. Part of the ESX / type VII secretion system (T7SS), which is composed of cytosolic and membrane components. The ESX membrane complex is composed of EccB, EccC and EccD.

The protein resides in the cell membrane. EsxB binding to the third FtsK domain causes multimerization; a subsequent unknown step relieves the allosteric inhibition of linker 2 on FtsK domain 1, activating the ATPase activity. Its function is as follows. Part of the ESX specialized secretion system, which exports proteins from the cell including EsxA (ESAT-6) and EsxB (CFP-10). Might be the translocase subunit. Probably only the first FtsK domain can hydrolyze ATP. The sequence is that of ESX secretion system protein EccC from Geobacillus thermodenitrificans (strain NG80-2).